The following is a 64-amino-acid chain: Large ribosomal subunit protein bL35 (64 aa).

Residues 1–28 show a composition bias toward basic residues; that stretch reads MPKMKTKSGAAKRFKKTAGGLKHKHAFK. The tract at residues 1 to 64 is disordered; the sequence is MPKMKTKSGA…ARVERSLRLR (64 aa). Residues 53–64 are compositionally biased toward basic and acidic residues; that stretch reads DVARVERSLRLR.

This sequence belongs to the bacterial ribosomal protein bL35 family.

The protein is Large ribosomal subunit protein bL35 of Pseudomonas aeruginosa (strain LESB58).